The chain runs to 291 residues: Ribosomal RNA small subunit methyltransferase H (291 aa).

S-adenosyl-L-methionine is bound by residues glycine 36–histidine 38, aspartate 55, alanine 90, aspartate 102, and glutamine 109.

The protein belongs to the methyltransferase superfamily. RsmH family.

The protein localises to the cytoplasm. It catalyses the reaction cytidine(1402) in 16S rRNA + S-adenosyl-L-methionine = N(4)-methylcytidine(1402) in 16S rRNA + S-adenosyl-L-homocysteine + H(+). In terms of biological role, specifically methylates the N4 position of cytidine in position 1402 (C1402) of 16S rRNA. The polypeptide is Ribosomal RNA small subunit methyltransferase H (Thermosipho africanus (strain TCF52B)).